The primary structure comprises 309 residues: Short chain dehydrogenase MYCFIDRAFT_6125 (309 aa).

Residues isoleucine 43, arginine 67, aspartate 88, and arginine 150 each coordinate NADP(+). Catalysis depends on serine 168, which acts as the Proton donor. 4 residues coordinate NADP(+): tyrosine 182, lysine 186, valine 215, and serine 217. Tyrosine 182 functions as the Proton acceptor in the catalytic mechanism. The Lowers pKa of active site Tyr role is filled by lysine 186.

This sequence belongs to the short-chain dehydrogenases/reductases (SDR) family.

It functions in the pathway secondary metabolite biosynthesis. Functionally, short chain dehydrogenase; part of the gene cluster that mediates the biosynthesis of an emodin derivative that may be involved in black Sigatoka disease of banana. The pathway begins with the synthesis of atrochrysone thioester by the polyketide synthase PKS8-1. The atrochrysone carboxyl ACP thioesterase MYCFIDRAFT_190111 then breaks the thioester bond and releases the atrochrysone carboxylic acid from PKS8-1. The decarboxylase MYCFIDRAFT_34057 then catalyzes the concerted decarboxylation-elimination required to convert atochrysone carboxylic acid into emodin anthrone, which is further oxidized to emodin by the anthrone oxygenase MYCFIDRAFT_34418. The functions of the other tailoring enzymes as well as the final product of the cluster have still to be identified. The chain is Short chain dehydrogenase MYCFIDRAFT_6125 from Pseudocercospora fijiensis (strain CIRAD86) (Black leaf streak disease fungus).